Here is a 373-residue protein sequence, read N- to C-terminus: Glutamate 5-kinase (373 aa).

Lysine 15 contacts ATP. Serine 55, aspartate 142, and asparagine 154 together coordinate substrate. ATP contacts are provided by residues 174 to 175 (TD) and 216 to 222 (TGGMVTK). Positions 281-359 (SGRVIVDDGA…GEIEAILGYK (79 aa)) constitute a PUA domain.

It belongs to the glutamate 5-kinase family.

It is found in the cytoplasm. The enzyme catalyses L-glutamate + ATP = L-glutamyl 5-phosphate + ADP. Its pathway is amino-acid biosynthesis; L-proline biosynthesis; L-glutamate 5-semialdehyde from L-glutamate: step 1/2. In terms of biological role, catalyzes the transfer of a phosphate group to glutamate to form L-glutamate 5-phosphate. This is Glutamate 5-kinase from Geobacter metallireducens (strain ATCC 53774 / DSM 7210 / GS-15).